We begin with the raw amino-acid sequence, 129 residues long: Glycine cleavage system H protein (129 aa).

The region spanning 24–106 is the Lipoyl-binding domain; sequence TVVVGVTSYA…YGDGWLIKVR (83 aa). An N6-lipoyllysine modification is found at Lys65.

The protein belongs to the GcvH family. In terms of assembly, the glycine cleavage system is composed of four proteins: P, T, L and H. Requires (R)-lipoate as cofactor.

The glycine cleavage system catalyzes the degradation of glycine. The H protein shuttles the methylamine group of glycine from the P protein to the T protein. The chain is Glycine cleavage system H protein from Gloeobacter violaceus (strain ATCC 29082 / PCC 7421).